The chain runs to 480 residues: MWEVIIMKTYIGKIHLKWCKNCNVPLLGRVCEVCGSKAEEVKLTPPGDPRLGFQYDMDFINKILEEEFGAKNVLNGKIILLNKIPGNEEAYEIIVDGEVKYLIYFDEDKEKWKVKLKLNGAKDLMEKGAYKKIIKIKNDVVEFLKNRKGSVLRPGIVEFTDDIEEKDDVIIVDENDRVVGVGLAVVSSEDIKNMEKGKVVKVRFFIKDNEDYKPGKIYDNLEEAFDLMVRANEGVIDNYERNAIGFIKNTYEKIKKPVMVAFSGGKDSLVTLILTLKALGKDIDVVFIDTGLEFEETLKNVEDVERHYGIKIIRLRGENFWEKVKEYGIPARDYRWCSEICKLEPLKKFIEENYEDDVLSFVGIRKYESFNRATKKRIHRNTYIKKQINALPIFHWSSLHVWIYLLREKAPYNKLYEKGFDRIGCFMCPAMEMGEMNKIKREFPKLWEKWENVLREYAEKHNLGEGWIKKGLWRWKHKRQ.

The 77-residue stretch at 131 to 207 (KKIIKIKNDV…KVVKVRFFIK (77 aa)) folds into the PUA domain.

In the C-terminal section; belongs to the PAPS reductase family.

This is an uncharacterized protein from Methanocaldococcus jannaschii (strain ATCC 43067 / DSM 2661 / JAL-1 / JCM 10045 / NBRC 100440) (Methanococcus jannaschii).